A 595-amino-acid chain; its full sequence is Mitoguardin 1 (595 aa).

2 helical membrane-spanning segments follow: residues 11–31 and 38–58; these read LPIK…YYSL and TGTK…IIIA.

The protein belongs to the mitoguardin family. In terms of assembly, homodimer and heterodimer; forms heterodimers with miga2.

It is found in the mitochondrion outer membrane. Functionally, regulator of mitochondrial fusion: acts by forming homo- and heterodimers at the mitochondrial outer membrane and facilitating the formation of pld6/MitoPLD dimers. May act by regulating phospholipid metabolism via pld6/MitoPLD. The chain is Mitoguardin 1 from Danio rerio (Zebrafish).